Consider the following 354-residue polypeptide: Uroporphyrinogen decarboxylase (354 aa).

Substrate is bound by residues 30–34, aspartate 79, tyrosine 154, serine 209, and histidine 333; that span reads RQAGR.

It belongs to the uroporphyrinogen decarboxylase family. Homodimer.

It is found in the cytoplasm. The catalysed reaction is uroporphyrinogen III + 4 H(+) = coproporphyrinogen III + 4 CO2. Its pathway is porphyrin-containing compound metabolism; protoporphyrin-IX biosynthesis; coproporphyrinogen-III from 5-aminolevulinate: step 4/4. Catalyzes the decarboxylation of four acetate groups of uroporphyrinogen-III to yield coproporphyrinogen-III. The polypeptide is Uroporphyrinogen decarboxylase (Mycolicibacterium vanbaalenii (strain DSM 7251 / JCM 13017 / BCRC 16820 / KCTC 9966 / NRRL B-24157 / PYR-1) (Mycobacterium vanbaalenii)).